Reading from the N-terminus, the 77-residue chain is Small integral membrane protein 5 (77 aa).

Residues 32–52 form a helical membrane-spanning segment; that stretch reads IVAFSVIILFTATVLLLLLIA.

The protein localises to the membrane. The protein is Small integral membrane protein 5 (SMIM5) of Homo sapiens (Human).